A 344-amino-acid chain; its full sequence is N-acetyl-gamma-glutamyl-phosphate reductase (344 aa).

The active site involves Cys-148.

This sequence belongs to the NAGSA dehydrogenase family. Type 1 subfamily.

It is found in the cytoplasm. The catalysed reaction is N-acetyl-L-glutamate 5-semialdehyde + phosphate + NADP(+) = N-acetyl-L-glutamyl 5-phosphate + NADPH + H(+). It participates in amino-acid biosynthesis; L-arginine biosynthesis; N(2)-acetyl-L-ornithine from L-glutamate: step 3/4. Functionally, catalyzes the NADPH-dependent reduction of N-acetyl-5-glutamyl phosphate to yield N-acetyl-L-glutamate 5-semialdehyde. In Clostridium botulinum (strain Alaska E43 / Type E3), this protein is N-acetyl-gamma-glutamyl-phosphate reductase.